The following is a 334-amino-acid chain: N-chimaerin (334 aa).

Over residues 1–10 the composition is skewed to polar residues; it reads MPSKESWSGR. A disordered region spans residues 1 to 22; it reads MPSKESWSGRKTNRATVHKSKQ. Thr-67 bears the Phosphothreonine mark. The Phorbol-ester/DAG-type zinc finger occupies 80 to 130; it reads VHNFKVHTFRGPHWCEYCANFMWGLIAQGVKCADCGLNVHKQCSKMVPNDC. The region spanning 143 to 334 is the Rho-GAP domain; that stretch reads CDLTTLVKAR…LLIKNEDILF (192 aa). Thr-215 carries the phosphothreonine modification.

Interacts with EPHA4; effector of EPHA4 in axon guidance linking EPHA4 activation to RAC1 regulation. In terms of processing, phosphorylated. Phosphorylation is EPHA4 kinase activity-dependent.

Its function is as follows. GTPase-activating protein for p21-rac and a phorbol ester receptor. Involved in the assembly of neuronal locomotor circuits as a direct effector of EPHA4 in axon guidance. The sequence is that of N-chimaerin (CHN1) from Bos taurus (Bovine).